The chain runs to 420 residues: Cell division protein FtsA (420 aa).

This sequence belongs to the FtsA/MreB family. In terms of assembly, self-interacts. Interacts with FtsZ.

It is found in the cell inner membrane. In terms of biological role, cell division protein that is involved in the assembly of the Z ring. May serve as a membrane anchor for the Z ring. The protein is Cell division protein FtsA of Escherichia coli O157:H7.